A 519-amino-acid polypeptide reads, in one-letter code: LysM domain-containing protein ARB_03442 (519 aa).

The signal sequence occupies residues 1–19 (MGQLKQLAGILALASPAIA). Asparagine 47 carries N-linked (GlcNAc...) asparagine glycosylation. The LysM domain maps to 312–358 (KYYNVVAGDTCASISSEFEVTMDELLTYNPELHPNCENLWANFAICV). Positions 314 to 358 (YNVVAGDTCASISSEFEVTMDELLTYNPELHPNCENLWANFAICV) are lysM domain. The span at 407 to 416 (PDAPDAQGQT) shows a compositional bias: low complexity. The segment at 407–458 (PDAPDAQGQTVHDDEPPEEPHIEEPPKDIPAGDDDDRKKAKLPLPSGKYPLP) is disordered. Over residues 417-433 (VHDDEPPEEPHIEEPPK) the composition is skewed to basic and acidic residues. Asparagine 460 is a glycosylation site (N-linked (GlcNAc...) asparagine). One can recognise a Chitin-binding type-1 domain in the interval 467–510 (DGSCNEYISCVGSPFGVCCSTSGWCGYGKPWCGVGNCVSGYCDT). Intrachain disulfides connect cysteine 470–cysteine 485, cysteine 476–cysteine 491, cysteine 484–cysteine 498, and cysteine 503–cysteine 508.

Its subcellular location is the secreted. Its function is as follows. Might have a role in sequestration of chitin oligosaccharides (breakdown products of fungal cell walls that are released during invasion and act as triggers of host immunity) to dampen host defense. The sequence is that of LysM domain-containing protein ARB_03442 from Arthroderma benhamiae (strain ATCC MYA-4681 / CBS 112371) (Trichophyton mentagrophytes).